The sequence spans 41 residues: Photosystem II reaction center protein L (41 aa).

A helical membrane pass occupies residues 20–40 (LFLGLLLVFVLGILSPATSLT).

Belongs to the PsbL family. PSII is composed of 1 copy each of membrane proteins PsbA, PsbB, PsbC, PsbD, PsbE, PsbF, PsbH, PsbI, PsbJ, PsbK, PsbL, PsbM, PsbT, PsbX, PsbY, PsbZ, Psb30/Ycf12, peripheral proteins PsbO, CyanoQ (PsbQ), PsbU, PsbV and a large number of cofactors. It forms dimeric complexes.

The protein resides in the cellular thylakoid membrane. Functionally, one of the components of the core complex of photosystem II (PSII). PSII is a light-driven water:plastoquinone oxidoreductase that uses light energy to abstract electrons from H(2)O, generating O(2) and a proton gradient subsequently used for ATP formation. It consists of a core antenna complex that captures photons, and an electron transfer chain that converts photonic excitation into a charge separation. This subunit is found at the monomer-monomer interface and is required for correct PSII assembly and/or dimerization. The sequence is that of Photosystem II reaction center protein L from Synechococcus sp. (strain ATCC 27144 / PCC 6301 / SAUG 1402/1) (Anacystis nidulans).